The following is a 250-amino-acid chain: Replicating protein (250 aa).

Disordered stretches follow at residues 1 to 23 (MFQQ…PCEK) and 168 to 250 (KAHM…KAFE). 2 stretches are compositionally biased toward basic and acidic residues: residues 13–23 (GTDEPAHPCEK) and 178–190 (DRLR…RTRA). Positions 218 to 237 (SRCSFTTPNRPRRTLPSSHP) are enriched in polar residues.

Functionally, required for replication. It likely regulates pTAR copy number. This is Replicating protein (repA) from Rhizobium radiobacter (Agrobacterium tumefaciens).